A 136-amino-acid chain; its full sequence is Histone H3.1 (136 aa).

The tract at residues 1 to 43 (MARTKQTARKSTGGKAPRKQLATKAARKSAPATGGVKKPHRYR) is disordered. Arg3 is subject to Asymmetric dimethylarginine; by PRMT6; alternate. Arg3 carries the post-translational modification Citrulline; alternate. Thr4 is modified (phosphothreonine; by HASPIN and VRK1). Residue Lys5 is modified to Allysine; alternate. Lys5 is modified (N6,N6,N6-trimethyllysine; alternate). Lys5 is modified (N6,N6-dimethyllysine; alternate). The residue at position 5 (Lys5) is an N6-(2-hydroxyisobutyryl)lysine; alternate. At Lys5 the chain carries N6-(beta-hydroxybutyryl)lysine; alternate. Residue Lys5 is modified to N6-acetyllysine; alternate. The residue at position 5 (Lys5) is an N6-crotonyllysine; alternate. Lys5 carries the post-translational modification N6-methyllysine; alternate. At Gln6 the chain carries 5-glutamyl dopamine; alternate. Gln6 carries the post-translational modification 5-glutamyl serotonin; alternate. Thr7 bears the Phosphothreonine; by PKC mark. A Citrulline; alternate modification is found at Arg9. Arg9 carries the post-translational modification Symmetric dimethylarginine; by PRMT5; alternate. Lys10 is modified (N6,N6,N6-trimethyllysine; alternate). At Lys10 the chain carries N6,N6-dimethyllysine; alternate. Position 10 is an N6-(2-hydroxyisobutyryl)lysine; alternate (Lys10). Lys10 carries the post-translational modification N6-(beta-hydroxybutyryl)lysine; alternate. Lys10 carries the post-translational modification N6-acetyllysine; alternate. Residue Lys10 is modified to N6-crotonyllysine; alternate. At Lys10 the chain carries N6-methyllysine; alternate. Position 10 is an N6-butyryllysine; alternate (Lys10). Residue Lys10 is modified to N6-lactoyllysine; alternate. Ser11 bears the ADP-ribosylserine; alternate mark. A Phosphoserine; alternate; by AURKB, AURKC, RPS6KA3, RPS6KA4 and RPS6KA5 modification is found at Ser11. Thr12 bears the Phosphothreonine; by PKC and CHEK1 mark. Lys15 is subject to N6-(2-hydroxyisobutyryl)lysine; alternate. An N6-(beta-hydroxybutyryl)lysine; alternate modification is found at Lys15. At Lys15 the chain carries N6-acetyllysine; alternate. Lys15 is modified (N6-lactoyllysine; alternate). N6-glutaryllysine; alternate is present on Lys15. Lys15 carries the N6-succinyllysine; alternate modification. Arg18 carries the post-translational modification Citrulline; alternate. Arg18 carries the post-translational modification Asymmetric dimethylarginine; by CARM1; alternate. Lys19 and Lys24 each carry N6-(2-hydroxyisobutyryl)lysine; alternate. N6-(beta-hydroxybutyryl)lysine; alternate occurs at positions 19 and 24. N6-acetyllysine; alternate is present on residues Lys19 and Lys24. Residues Lys19 and Lys24 each carry the N6-crotonyllysine; alternate modification. An N6-methyllysine; alternate mark is found at Lys19 and Lys24. Residues Lys19 and Lys24 each carry the N6-butyryllysine; alternate modification. Residues Lys19 and Lys24 each carry the N6-lactoyllysine; alternate modification. N6-glutaryllysine; alternate is present on residues Lys19 and Lys24. Lys19 is lipidated: N6-decanoyllysine. Arg27 is subject to Citrulline. Residue Lys28 is modified to N6,N6,N6-trimethyllysine; alternate. At Lys28 the chain carries N6,N6-dimethyllysine; alternate. N6-(2-hydroxyisobutyryl)lysine; alternate is present on Lys28. Position 28 is an N6-(beta-hydroxybutyryl)lysine; alternate (Lys28). Lys28 is modified (N6-acetyllysine; alternate). Lys28 is modified (N6-crotonyllysine; alternate). Lys28 carries the N6-methyllysine; alternate modification. Position 28 is an N6-lactoyllysine; alternate (Lys28). Residue Lys28 is modified to N6-glutaryllysine; alternate. Ser29 carries the post-translational modification ADP-ribosylserine; alternate. Ser29 carries the post-translational modification Phosphoserine; alternate; by AURKB, AURKC and RPS6KA5. Lys37 carries the post-translational modification N6,N6,N6-trimethyllysine; alternate. Position 37 is an N6,N6-dimethyllysine; alternate (Lys37). An N6-(2-hydroxyisobutyryl)lysine; alternate modification is found at Lys37. Lys37 bears the N6-acetyllysine; alternate mark. At Lys37 the chain carries N6-methyllysine; alternate. Lys38 is modified (N6-methyllysine). Residue Tyr42 is modified to Phosphotyrosine. An N6,N6,N6-trimethyllysine; alternate modification is found at Lys57. Position 57 is an N6-(2-hydroxyisobutyryl)lysine; alternate (Lys57). Lys57 carries the N6-(beta-hydroxybutyryl)lysine; alternate modification. At Lys57 the chain carries N6-acetyllysine; alternate. Lys57 carries the post-translational modification N6-crotonyllysine; alternate. The residue at position 57 (Lys57) is an N6-lactoyllysine; alternate. Lys57 bears the N6-glutaryllysine; alternate mark. Lys57 bears the N6-succinyllysine; alternate mark. N6-methyllysine; by EHMT2; alternate is present on Lys57. Residue Ser58 is modified to Phosphoserine. 2 positions are modified to N6-(2-hydroxyisobutyryl)lysine; alternate: Lys65 and Lys80. N6-methyllysine; alternate occurs at positions 65 and 80. Position 80 is an N6,N6,N6-trimethyllysine; alternate (Lys80). An N6,N6-dimethyllysine; alternate modification is found at Lys80. Lys80 is modified (N6-(beta-hydroxybutyryl)lysine; alternate). Lys80 is modified (N6-acetyllysine; alternate). Residue Lys80 is modified to N6-lactoyllysine; alternate. Position 80 is an N6-glutaryllysine; alternate (Lys80). Lys80 is modified (N6-succinyllysine; alternate). At Thr81 the chain carries Phosphothreonine. Ser87 carries the post-translational modification Phosphoserine. Residue Thr108 is modified to Phosphothreonine. An N6-acetyllysine; alternate mark is found at Lys116 and Lys123. Lys116 and Lys123 each carry N6-glutaryllysine; alternate. Lys123 carries the post-translational modification N6-(2-hydroxyisobutyryl)lysine; alternate. The residue at position 123 (Lys123) is an N6-(beta-hydroxybutyryl)lysine; alternate. Lys123 carries the N6-methyllysine; alternate modification. At Lys123 the chain carries N6-succinyllysine; alternate.

The protein belongs to the histone H3 family. As to quaternary structure, the nucleosome is a histone octamer containing two molecules each of H2A, H2B, H3 and H4 assembled in one H3-H4 heterotetramer and two H2A-H2B heterodimers. The octamer wraps approximately 147 bp of DNA. Interacts with TONSL; CHAF1A; CHAF1B; MCM2 and DNAJC9. Interacts with NASP; NASP is a histone chaperone that stabilizes and maintains a soluble pool of Histone H3-H4 dimers. Post-translationally, acetylation is generally linked to gene activation. Acetylation on Lys-10 (H3K9ac) impairs methylation at Arg-9 (H3R8me2s). Acetylation on Lys-19 (H3K18ac) and Lys-24 (H3K24ac) favors methylation at Arg-18 (H3R17me). Acetylation at Lys-123 (H3K122ac) by EP300/p300 plays a central role in chromatin structure: localizes at the surface of the histone octamer and stimulates transcription, possibly by promoting nucleosome instability. Citrullination at Arg-9 (H3R8ci) and/or Arg-18 (H3R17ci) by PADI4 impairs methylation and represses transcription. In terms of processing, asymmetric dimethylation at Arg-18 (H3R17me2a) by CARM1 is linked to gene activation. Symmetric dimethylation at Arg-9 (H3R8me2s) by PRMT5 is linked to gene repression. Asymmetric dimethylation at Arg-3 (H3R2me2a) by PRMT6 is linked to gene repression and is mutually exclusive with H3 Lys-5 methylation (H3K4me2 and H3K4me3). H3R2me2a is present at the 3' of genes regardless of their transcription state and is enriched on inactive promoters, while it is absent on active promoters. Post-translationally, methylation at Lys-5 (H3K4me), Lys-37 (H3K36me) and Lys-80 (H3K79me) are linked to gene activation. Methylation at Lys-5 (H3K4me) facilitates subsequent acetylation of H3 and H4. Methylation at Lys-80 (H3K79me) is associated with DNA double-strand break (DSB) responses and is a specific target for TP53BP1. Methylation at Lys-10 (H3K9me) and Lys-28 (H3K27me) are linked to gene repression. Methylation at Lys-10 (H3K9me) is a specific target for HP1 proteins (CBX1, CBX3 and CBX5) and prevents subsequent phosphorylation at Ser-11 (H3S10ph) and acetylation of H3 and H4. Methylation at Lys-5 (H3K4me) and Lys-80 (H3K79me) require preliminary monoubiquitination of H2B at 'Lys-120'. Methylation at Lys-10 (H3K9me) and Lys-28 (H3K27me) are enriched in inactive X chromosome chromatin. Monomethylation at Lys-57 (H3K56me1) by EHMT2/G9A in G1 phase promotes interaction with PCNA and is required for DNA replication. Phosphorylated at Thr-4 (H3T3ph) by VRK1. Phosphorylated at Thr-4 (H3T3ph) by HASPIN during prophase and dephosphorylated during anaphase. Phosphorylation at Ser-11 (H3S10ph) by AURKB is crucial for chromosome condensation and cell-cycle progression during mitosis and meiosis. In addition phosphorylation at Ser-11 (H3S10ph) by RPS6KA4 and RPS6KA5 is important during interphase because it enables the transcription of genes following external stimulation, like mitogens, stress, growth factors or UV irradiation and result in the activation of genes, such as c-fos and c-jun. Phosphorylation at Ser-11 (H3S10ph), which is linked to gene activation, prevents methylation at Lys-10 (H3K9me) but facilitates acetylation of H3 and H4. Phosphorylation at Ser-11 (H3S10ph) by AURKB mediates the dissociation of HP1 proteins (CBX1, CBX3 and CBX5) from heterochromatin. Phosphorylation at Ser-11 (H3S10ph) is also an essential regulatory mechanism for neoplastic cell transformation. Phosphorylated at Ser-29 (H3S28ph) by MAP3K20 isoform 1, RPS6KA5 or AURKB during mitosis or upon ultraviolet B irradiation. Phosphorylation at Thr-7 (H3T6ph) by PRKCB is a specific tag for epigenetic transcriptional activation that prevents demethylation of Lys-5 (H3K4me) by LSD1/KDM1A. At centromeres, specifically phosphorylated at Thr-12 (H3T11ph) from prophase to early anaphase, by DAPK3 and PKN1. Phosphorylation at Thr-12 (H3T11ph) by PKN1 or isoform M2 of PKM (PKM2) is a specific tag for epigenetic transcriptional activation that promotes demethylation of Lys-10 (H3K9me) by KDM4C/JMJD2C. Phosphorylation at Thr-12 (H3T11ph) by chromatin-associated CHEK1 regulates the transcription of cell cycle regulatory genes by modulating acetylation of Lys-10 (H3K9ac). Phosphorylation at Tyr-42 (H3Y41ph) by JAK2 promotes exclusion of CBX5 (HP1 alpha) from chromatin. In terms of processing, monoubiquitinated by RAG1 in lymphoid cells, monoubiquitination is required for V(D)J recombination. Ubiquitinated by the CUL4-DDB-RBX1 complex in response to ultraviolet irradiation. This may weaken the interaction between histones and DNA and facilitate DNA accessibility to repair proteins. Post-translationally, lysine deamination at Lys-5 (H3K4all) to form allysine is mediated by LOXL2. Allysine formation by LOXL2 only takes place on H3K4me3 and results in gene repression. Crotonylation (Kcr) is specifically present in male germ cells and marks testis-specific genes in post-meiotic cells, including X-linked genes that escape sex chromosome inactivation in haploid cells. Crotonylation marks active promoters and enhancers and confers resistance to transcriptional repressors. It is also associated with post-meiotically activated genes on autosomes. In terms of processing, butyrylation of histones marks active promoters and competes with histone acetylation. It is present during late spermatogenesis. Post-translationally, succinylation at Lys-80 (H3K79succ) by KAT2A takes place with a maximum frequency around the transcription start sites of genes. It gives a specific tag for epigenetic transcription activation. Desuccinylation at Lys-123 (H3K122succ) by SIRT7 in response to DNA damage promotes chromatin condensation and double-strand breaks (DSBs) repair. Serine ADP-ribosylation by PARP1 or PARP2 constitutes the primary form of ADP-ribosylation of proteins in response to DNA damage. Serine ADP-ribosylation at Ser-11 (H3S10ADPr) promotes recruitment of CHD1L. H3S10ADPr is mutually exclusive with phosphorylation at Ser-11 (H3S10ph) and impairs acetylation at Lys-10 (H3K9ac). In terms of processing, serotonylated by TGM2 at Gln-6 (H3Q5ser) during serotonergic neuron differentiation. H3Q5ser is associated with trimethylation of Lys-5 (H3K4me3) and enhances general transcription factor IID (TFIID) complex-binding to H3K4me3, thereby facilitating transcription. Post-translationally, dopaminylated by TGM2 at Gln-6 (H3Q5dop) in ventral tegmental area (VTA) neurons. H3Q5dop mediates neurotransmission-independent role of nuclear dopamine by regulating relapse-related transcriptional plasticity in the reward system. Lactylated in macrophages by EP300/P300 by using lactoyl-CoA directly derived from endogenous or exogenous lactate, leading to stimulates gene transcription.

The protein localises to the nucleus. It is found in the chromosome. Core component of nucleosome. Nucleosomes wrap and compact DNA into chromatin, limiting DNA accessibility to the cellular machineries which require DNA as a template. Histones thereby play a central role in transcription regulation, DNA repair, DNA replication and chromosomal stability. DNA accessibility is regulated via a complex set of post-translational modifications of histones, also called histone code, and nucleosome remodeling. The chain is Histone H3.1 from Homo sapiens (Human).